Reading from the N-terminus, the 1769-residue chain is MASITQLFDDLCEALLPAAQARPGQRSVNRKRAKRSLKRVAYNALFANLFQEDTHQRQPDSSKLPVKNKVLMLSFDLRVGGLGPEADRLEELVEKLEAAPDCPFVEVASVLDLLVQLAGSGPPQVLRRKRDYFFNNKHAGRNIPYSGYDCYDLSVFEMDVRSFISGEENLCHHTVQEALQVMEAAPGTGLPTVGLFSIGDSCGDRFERDTRVSLFGALVHSRTYDMDVRLDLPPVPDSADFSGLAIKVPQIVDQWEDEGFQSASNLTPDSQSEPSMTPDLDLWEAVLTYEASKRRCWERIGCPPGHREEPYLTEAGRDAFDRFCRLRHGELQALSGGLLQAPKPVLVEESELVKDSLNVLLGVVSATFSLCRPTQAFVVEPGVHVSGASPESISSILSEVAEYGTCYTRLSHFSLQPVVGSLCSRGLVFQAFTSGLRRYLQYYRACVLSTPPTLSLLTIGFLFKKLGRQLRYLAELCGVGTVSLATSGEPRAVFPTGVKLLSYLYQEALDNCSNEHYPVLLSLLKTSCEPYTRFIHDWVYSGVFRDVYGEFMIQVNHEYLSFRDKFYWTHGYVLISKEVEDCVPVFLKHIAHDVYVCGKTINLLKLCCPRHYLCWSDVPVPRISVIFSLEELKEIEKDCAVYVGRMERVARHSCISKEEKELRMEIAKQELIVHAREAASRVLSELSDRQMAEQIAQDTRKREQFQRLKEQFVKDQERRLAARQEELDDDFSYARELRDREKRLKALEEELERKARQALVDHYSKLSAEAARREQKALWRIQRHRLESARLRFLLEDQKCIQEMLRDMEAQQPQEPPSVFPSTGSQVTSTGPEHAGEGHSCDPGFTELHWGCPSLPCASTPSVPKSATEGADDSGAGPFSTGLSITDFLPVDSGEEQPVENTGVPFLEVALQTICSDLSPVAPEPAALTAGGPQATQSEYDFNTILRPAMATSLSPGPFQDVQNSVDSDKQHLLGDMSTKVDSYIHDMQETLPCPHPLSHATPVEGSLQPVGQLLEHMSETTVSTESHASGMAPCQQLSISRHVSDANIKVGDYMSDVALPRPRWNVHGHVSEASIGVGENMAEVAPSRPRWNVHGHVSDASIKIGENMSDVAPSRTRWNIHGHVSDASIKVGENVSDVTPSRPRWNVHGHVSEASIKVGENVSDVTPSRPRWNVHGHVSEASIKVGENVSDVTPSRPRWNVHGHVSDASIRIGENVSDTDLDLQQRGCAQPPLILEEPLPEAEADLKPHQCPPAHVSEAVLGVEAQSPALECGPQLPEKTKPTVCSGFGRTEEGSLQTKTLVAEPSMLGSGIPEEKGPGKSRDAEDLSPCLPSSSQEDTAVPSSPGPSDEVSNTEAEARRWGKEQAYLTDLTKLYHLEQYPDSYDSMSEPPVAHLVHHMLPRAFAFPVDPQVQSAVDESAVQLSELLTLPVLMKRSLMAPLAAHVSLVSKAAVDYFFVELHLETHFEALRHFLLMEDGEFAQSLSDLLFEKLGAGQTPGELLNPLVLNSILSKALQYSLHGDTPHASNLSFALKYLPEVFAPNAPDVLSCLELRYKVDWPLNIVITESCLNKYSGIFSFLLQLKLMMWTLKDICFHLKRTALVSHTAGSVQFRQLQLFKHEMQHFVKVIQGYIANQILHVSWCEFRARLAVVGDLEEIQRAHAEYLHRAVFRGLLTEKAAPVMNIIHSIFSLVLKFRSQLISQNWGPATGPRGAEHPNFPLMQQSYSTFKYYSHFLFKVVTKLVNRGYQPHLEDFLLRINFNNYYQDS.

3 disordered regions span residues 809 to 842 (EAQQPQEPPSVFPSTGSQVTSTGPEHAGEGHSCD), 859 to 881 (STPSVPKSATEGADDSGAGPFST), and 1284 to 1360 (TVCS…AEAR). The segment covering 820-831 (FPSTGSQVTSTG) has biased composition (polar residues). Basic and acidic residues predominate over residues 1314–1326 (PEEKGPGKSRDAE). Residues 1332–1343 (LPSSSQEDTAVP) are compositionally biased toward polar residues.

This sequence belongs to the TUBGCP family. As to quaternary structure, component of the gamma-tubulin ring complex (gTuRC) consisting of TUBGCP2, TUBGCP3, TUBGCP4, TUBGCP5 and TUBGCP6 and gamma-tubulin TUBG1 or TUBG2. TUBGCP2, TUBGCP3, TUBGCP4, TUBGCP5 and TUBGCP6 assemble in a 5:5:2:1:1 stoichiometry; each is associated with a gamma-tubulin, thereby arranging 14 gamma-tubulins in a helical manner. Gamma-tubulin at the first position is blocked by TUBGCP3 at the last position, allowing 13 protafilaments to grow into a microtubule. The gTuRC (via TUBGCP3 and TUBGCP6) interacts with ACTB and MZT1; the interactions form a luminal bridge that stabilizes the initial structure during complex assembly. The gTuRC (via TUBGCP2) interacts with MZT2A/MZT2B and CDK5RAP2 (via CM1 motif); the interactions play a role in gTuRC activation.

Its subcellular location is the cytoplasm. The protein localises to the cytoskeleton. It localises to the microtubule organizing center. It is found in the centrosome. Its function is as follows. Component of the gamma-tubulin ring complex (gTuRC) which mediates microtubule nucleation. The gTuRC regulates the minus-end nucleation of alpha-beta tubulin heterodimers that grow into microtubule protafilaments, a critical step in centrosome duplication and spindle formation. The chain is Gamma-tubulin complex component 6 (Tubgcp6) from Mus musculus (Mouse).